The chain runs to 469 residues: Cytochrome P450 85A1 (469 aa).

The chain crosses the membrane as a helical span at residues 1 to 21 (MVLVAIGVVVAAAVVVSSLLL). Heme is bound at residue C419.

This sequence belongs to the cytochrome P450 family. Requires heme as cofactor. In terms of tissue distribution, expressed at low levels in all the tissues, but preferentially in the leaf sheath.

It is found in the membrane. The catalysed reaction is 6-deoxoteasterone + reduced [NADPH--hemoprotein reductase] + O2 = 6alpha-hydroxyteasterone + oxidized [NADPH--hemoprotein reductase] + H2O + H(+). It carries out the reaction 6alpha-hydroxytyphasterol + reduced [NADPH--hemoprotein reductase] + O2 = teasterone + oxidized [NADPH--hemoprotein reductase] + 2 H2O + H(+). The enzyme catalyses 3-dehydro-6-deoxoteasterone + reduced [NADPH--hemoprotein reductase] + O2 = 3-dehydro-6alpha-hydroxyteasterone + oxidized [NADPH--hemoprotein reductase] + H2O + H(+). It catalyses the reaction 3-dehydro-6alpha-hydroxyteasterone + reduced [NADPH--hemoprotein reductase] + O2 = 3-dehydroteasterone + oxidized [NADPH--hemoprotein reductase] + 2 H2O + H(+). The catalysed reaction is 6-deoxotyphasterol + reduced [NADPH--hemoprotein reductase] + O2 = 6alpha-hydroxytyphasterol + oxidized [NADPH--hemoprotein reductase] + H2O + H(+). It carries out the reaction 6alpha-hydroxytyphasterol + reduced [NADPH--hemoprotein reductase] + O2 = typhasterol + oxidized [NADPH--hemoprotein reductase] + 2 H2O + H(+). The enzyme catalyses 3-dehydro-6-deoxoteasterone + 2 reduced [NADPH--hemoprotein reductase] + 2 O2 = 3-dehydroteasterone + 2 oxidized [NADPH--hemoprotein reductase] + 3 H2O + 2 H(+). It catalyses the reaction 6-deoxoteasterone + 2 reduced [NADPH--hemoprotein reductase] + 2 O2 = teasterone + 2 oxidized [NADPH--hemoprotein reductase] + 3 H2O + 2 H(+). The catalysed reaction is 6-deoxotyphasterol + 2 reduced [NADPH--hemoprotein reductase] + 2 O2 = typhasterol + 2 oxidized [NADPH--hemoprotein reductase] + 3 H2O + 2 H(+). It participates in plant hormone biosynthesis; brassinosteroid biosynthesis. In terms of biological role, catalyzes the C6-oxidation step in brassinosteroids biosynthesis. May convert 6-deoxoteasterone (6-deoxoTE) to teasterone (TE), 3-dehydro-6-deoxoteasterone (6-deoxo3DT, 6-deoxo3DHT) to 3-dehydroteasterone (3DT, 3-DHT), and 6-deoxotyphasterol (6-deoxoTY) to typhasterol (TY). Involved in the organization and elongation of the leaf and stem cells. Not able to convert 6-deoxocastasterone (6-deoxoCS) and castasterone (CS) to brassinolide (BL). This Oryza sativa subsp. japonica (Rice) protein is Cytochrome P450 85A1.